The following is a 286-amino-acid chain: Alpha/beta-gliadin (286 aa).

The first 20 residues, 1–20, serve as a signal peptide directing secretion; that stretch reads MKTFLILVLLAIVATTATTA. The segment at 51 to 120 is disordered; sequence LGQQQPFPPQ…QQPISQQQQQ (70 aa). A compositionally biased stretch (pro residues) spans 56-71; that stretch reads PFPPQQPYPQPQPFPS. Over residues 72 to 92 the composition is skewed to low complexity; it reads QLPYLQLQPFPQPQLPYSQPQ. Residues 93–104 are compositionally biased toward pro residues; that stretch reads PFRPQQPYPQPQ. Residues 105–120 are compositionally biased toward low complexity; the sequence is PQYSQPQQPISQQQQQ.

The protein belongs to the gliadin/glutenin family. Post-translationally, substrate of transglutaminase.

Functionally, gliadin is the major seed storage protein in wheat. The chain is Alpha/beta-gliadin from Triticum aestivum (Wheat).